Consider the following 238-residue polypeptide: Ribosomal RNA small subunit methyltransferase G (238 aa).

Residues glycine 75, leucine 80, alanine 126–glutamate 127, and arginine 142 contribute to the S-adenosyl-L-methionine site.

Belongs to the methyltransferase superfamily. RNA methyltransferase RsmG family.

It localises to the cytoplasm. Specifically methylates the N7 position of guanine in position 518 of 16S rRNA. The polypeptide is Ribosomal RNA small subunit methyltransferase G (Streptomyces avermitilis (strain ATCC 31267 / DSM 46492 / JCM 5070 / NBRC 14893 / NCIMB 12804 / NRRL 8165 / MA-4680)).